Consider the following 314-residue polypeptide: Glycerol-3-phosphate dehydrogenase [NAD(P)+] (314 aa).

Ser-14, Phe-15, Arg-35, and Lys-108 together coordinate NADPH. The sn-glycerol 3-phosphate site is built by Lys-108 and Gly-136. Residue Ala-140 coordinates NADPH. Sn-glycerol 3-phosphate contacts are provided by Lys-191, Asp-247, Ser-257, Arg-258, and Asn-259. Lys-191 (proton acceptor) is an active-site residue. NADPH is bound at residue Arg-258. NADPH contacts are provided by Leu-282 and Glu-284.

This sequence belongs to the NAD-dependent glycerol-3-phosphate dehydrogenase family.

It is found in the cytoplasm. It catalyses the reaction sn-glycerol 3-phosphate + NAD(+) = dihydroxyacetone phosphate + NADH + H(+). The enzyme catalyses sn-glycerol 3-phosphate + NADP(+) = dihydroxyacetone phosphate + NADPH + H(+). It functions in the pathway membrane lipid metabolism; glycerophospholipid metabolism. Its function is as follows. Catalyzes the reduction of the glycolytic intermediate dihydroxyacetone phosphate (DHAP) to sn-glycerol 3-phosphate (G3P), the key precursor for phospholipid synthesis. The protein is Glycerol-3-phosphate dehydrogenase [NAD(P)+] of Rickettsia bellii (strain OSU 85-389).